The primary structure comprises 236 residues: UPF0257 lipoprotein YnfC (236 aa).

Positions 1–16 are cleaved as a signal peptide; it reads MKYKLLPCLLAIFLTG. Cysteine 17 carries N-palmitoyl cysteine lipidation. Cysteine 17 carries S-diacylglycerol cysteine lipidation.

Belongs to the UPF0257 family.

It is found in the cell membrane. In Shigella flexneri, this protein is UPF0257 lipoprotein YnfC (ynfC).